The primary structure comprises 612 residues: Dihydroxy-acid dehydratase (612 aa).

D81 is a binding site for Mg(2+). C122 serves as a coordination point for [2Fe-2S] cluster. 2 residues coordinate Mg(2+): D123 and K124. Position 124 is an N6-carboxylysine (K124). C195 serves as a coordination point for [2Fe-2S] cluster. E491 is a binding site for Mg(2+). The Proton acceptor role is filled by S517.

Belongs to the IlvD/Edd family. Homodimer. [2Fe-2S] cluster serves as cofactor. Requires Mg(2+) as cofactor.

The catalysed reaction is (2R)-2,3-dihydroxy-3-methylbutanoate = 3-methyl-2-oxobutanoate + H2O. It carries out the reaction (2R,3R)-2,3-dihydroxy-3-methylpentanoate = (S)-3-methyl-2-oxopentanoate + H2O. It participates in amino-acid biosynthesis; L-isoleucine biosynthesis; L-isoleucine from 2-oxobutanoate: step 3/4. The protein operates within amino-acid biosynthesis; L-valine biosynthesis; L-valine from pyruvate: step 3/4. Its function is as follows. Functions in the biosynthesis of branched-chain amino acids. Catalyzes the dehydration of (2R,3R)-2,3-dihydroxy-3-methylpentanoate (2,3-dihydroxy-3-methylvalerate) into 2-oxo-3-methylpentanoate (2-oxo-3-methylvalerate) and of (2R)-2,3-dihydroxy-3-methylbutanoate (2,3-dihydroxyisovalerate) into 2-oxo-3-methylbutanoate (2-oxoisovalerate), the penultimate precursor to L-isoleucine and L-valine, respectively. This chain is Dihydroxy-acid dehydratase, found in Haemophilus influenzae (strain PittEE).